Reading from the N-terminus, the 619-residue chain is uncharacterized protein (619 aa).

The N-terminal stretch at 1 to 21 (MKKLIAIIAVAAVVIAGFVFT) is a signal peptide.

This is an uncharacterized protein from Archaeoglobus fulgidus (strain ATCC 49558 / DSM 4304 / JCM 9628 / NBRC 100126 / VC-16).